The chain runs to 424 residues: Folate-like transporter 3 (424 aa).

N-linked (GlcNAc...) asparagine glycosylation occurs at Asn35. Transmembrane regions (helical) follow at residues 55-75 (VALI…ILII), 78-98 (LSYF…CMQL), 101-119 (LFYG…YIYV), 136-156 (ALLV…GLNW), and 164-184 (IINL…PHVP). A glycan (N-linked (GlcNAc...) asparagine) is linked at Asn254. Transmembrane regions (helical) follow at residues 313–333 (GLLF…CYII), 361–381 (LFGI…AIVI), and 392–412 (FVVY…IFGI).

This sequence belongs to the reduced folate carrier (RFC) transporter (TC 2.A.48) family.

It localises to the membrane. This chain is Folate-like transporter 3 (folt-3), found in Caenorhabditis elegans.